Reading from the N-terminus, the 136-residue chain is Histone H3.3 (136 aa).

The tract at residues 1–42 (MARTKQTARKSTGGKAPRKQLASKAARKSAPVSGGVKKPHRY) is disordered. The residue at position 5 (K5) is an N6,N6,N6-trimethyllysine; alternate. N6,N6-dimethyllysine; alternate is present on K5. Residues K5 and K10 each carry the N6-methyllysine; alternate modification. K10 is subject to N6-acetyllysine; alternate. Position 11 is a phosphoserine (S11). N6,N6-dimethyllysine; alternate is present on K15. N6-acetyllysine; alternate occurs at positions 15, 19, 24, 28, and 37. Residues K19, K24, K28, and K37 each carry the N6-methyllysine; alternate modification. N6,N6,N6-trimethyllysine; alternate occurs at positions 28 and 37. 2 positions are modified to N6,N6-dimethyllysine; alternate: K28 and K37. 2 positions are modified to N6-acetyllysine: K57 and K65. K80 bears the N6,N6,N6-trimethyllysine; alternate mark. K80 bears the N6,N6-dimethyllysine; alternate mark. K80 carries the N6-methyllysine; alternate modification.

Belongs to the histone H3 family. As to quaternary structure, the nucleosome is a histone octamer containing two molecules each of H2A, H2B, H3 and H4 assembled in one H3-H4 heterotetramer and two H2A-H2B heterodimers. The octamer wraps approximately 147 bp of DNA. Post-translationally, phosphorylated by IPL1 to form H3S10ph. H3S10ph promotes subsequent H3K14ac formation by GCN5 and is required for transcriptional activation through TBP recruitment to the promoters. In terms of processing, mono-, di- and trimethylated by the COMPASS complex to form H3K4me1/2/3. H3K4me activates gene expression by regulating transcription elongation and plays a role in telomere length maintenance. H3K4me enrichment correlates with transcription levels, and occurs in a 5' to 3' gradient with H3K4me3 enrichment at the 5'-end of genes, shifting to H3K4me2 and then H3K4me1. Methylated by SET2 to form H3K36me. H3K36me represses gene expression. Methylated by DOT1 to form H3K79me. H3K79me is required for association of SIR proteins with telomeric regions and for telomeric silencing. The COMPASS-mediated formation of H3K4me2/3 and the DOT1-mediated formation of H3K79me require H2BK123ub1. Acetylation of histone H3 leads to transcriptional activation. H3K14ac formation by GCN5 is promoted by H3S10ph. H3K14ac can also be formed by ESA1. H3K56ac formation occurs predominantly in newly synthesized H3 molecules during G1, S and G2/M of the cell cycle and may be involved in DNA repair.

It is found in the nucleus. The protein localises to the chromosome. Core component of nucleosome. Nucleosomes wrap and compact DNA into chromatin, limiting DNA accessibility to the cellular machineries which require DNA as a template. Histones thereby play a central role in transcription regulation, DNA repair, DNA replication and chromosomal stability. DNA accessibility is regulated via a complex set of post-translational modifications of histones, also called histone code, and nucleosome remodeling. This is Histone H3.3 (HHT3) from Debaryomyces hansenii (strain ATCC 36239 / CBS 767 / BCRC 21394 / JCM 1990 / NBRC 0083 / IGC 2968) (Yeast).